Reading from the N-terminus, the 266-residue chain is MLTKRIIPCLDVDNGRVVKGLNFESIKDAGDPVELAAKYSKDGADELVFLDITASQEKRKTIKELVSNVAKVIDIPFTVGGGVNSMDDARNILLSGADKVGVNTGAVKNPELLTELMTIFGKQCVVVAIDAKRNYSEDSTKTMFEENGKKFWFEVFIYGGKQETGLDAIQWAKKATELGAGEVLLTSIDKDGTKDGYDILLTKKIVDTVSVPVIASGGCGKPEDMSEIFVKSDVDAALAASIFHYENQSVNQVKKILRDKNISVRL.

Residues aspartate 11 and aspartate 130 contribute to the active site.

The protein belongs to the HisA/HisF family. Heterodimer of HisH and HisF.

It localises to the cytoplasm. It catalyses the reaction 5-[(5-phospho-1-deoxy-D-ribulos-1-ylimino)methylamino]-1-(5-phospho-beta-D-ribosyl)imidazole-4-carboxamide + L-glutamine = D-erythro-1-(imidazol-4-yl)glycerol 3-phosphate + 5-amino-1-(5-phospho-beta-D-ribosyl)imidazole-4-carboxamide + L-glutamate + H(+). Its pathway is amino-acid biosynthesis; L-histidine biosynthesis; L-histidine from 5-phospho-alpha-D-ribose 1-diphosphate: step 5/9. Its function is as follows. IGPS catalyzes the conversion of PRFAR and glutamine to IGP, AICAR and glutamate. The HisF subunit catalyzes the cyclization activity that produces IGP and AICAR from PRFAR using the ammonia provided by the HisH subunit. This Nitrosopumilus maritimus (strain SCM1) protein is Imidazole glycerol phosphate synthase subunit HisF.